Reading from the N-terminus, the 89-residue chain is Small ribosomal subunit protein uS15 (89 aa).

The protein belongs to the universal ribosomal protein uS15 family. As to quaternary structure, part of the 30S ribosomal subunit. Forms a bridge to the 50S subunit in the 70S ribosome, contacting the 23S rRNA.

Its function is as follows. One of the primary rRNA binding proteins, it binds directly to 16S rRNA where it helps nucleate assembly of the platform of the 30S subunit by binding and bridging several RNA helices of the 16S rRNA. Functionally, forms an intersubunit bridge (bridge B4) with the 23S rRNA of the 50S subunit in the ribosome. This chain is Small ribosomal subunit protein uS15, found in Buchnera aphidicola subsp. Cinara cedri (strain Cc).